The primary structure comprises 250 residues: Large ribosomal subunit protein uL30B (250 aa).

It belongs to the universal ribosomal protein uL30 family. Component of the large ribosomal subunit (LSU). Mature yeast ribosomes consist of a small (40S) and a large (60S) subunit. The 40S small subunit contains 1 molecule of ribosomal RNA (18S rRNA) and at least 33 different proteins. The large 60S subunit contains 3 rRNA molecules (25S, 5.8S and 5S rRNA) and at least 46 different proteins.

Its subcellular location is the cytoplasm. The protein localises to the nucleus. It is found in the nucleolus. Functionally, component of the ribosome, a large ribonucleoprotein complex responsible for the synthesis of proteins in the cell. The small ribosomal subunit (SSU) binds messenger RNAs (mRNAs) and translates the encoded message by selecting cognate aminoacyl-transfer RNA (tRNA) molecules. The large subunit (LSU) contains the ribosomal catalytic site termed the peptidyl transferase center (PTC), which catalyzes the formation of peptide bonds, thereby polymerizing the amino acids delivered by tRNAs into a polypeptide chain. The nascent polypeptides leave the ribosome through a tunnel in the LSU and interact with protein factors that function in enzymatic processing, targeting, and the membrane insertion of nascent chains at the exit of the ribosomal tunnel. The polypeptide is Large ribosomal subunit protein uL30B (rpl702) (Schizosaccharomyces pombe (strain 972 / ATCC 24843) (Fission yeast)).